Reading from the N-terminus, the 82-residue chain is Turripeptide Gsp9.2 (82 aa).

An N-terminal signal peptide occupies residues 1 to 23; it reads MMAKLMITVMMVLLLSLQQGADG. Positions 24-46 are excised as a propeptide; sequence RSERWRKNQMAASSIMRNLITAR. A 4-hydroxyproline mark is found at P49 and P50. 3 disulfides stabilise this stretch: C53–C68, C58–C72, and C64–C79. E56 bears the 4-carboxyglutamate mark.

It belongs to the Pg turripeptide superfamily. As to expression, expressed by the venom duct.

It localises to the secreted. This chain is Turripeptide Gsp9.2, found in Gemmula speciosa (Splendid gem-turris).